The following is a 1428-amino-acid chain: DNA-directed RNA polymerase subunit beta' (1428 aa).

The Zn(2+) site is built by C66, C68, C81, and C84. 3 residues coordinate Mg(2+): D472, D474, and D476. C816, C890, C897, and C900 together coordinate Zn(2+).

It belongs to the RNA polymerase beta' chain family. The RNAP catalytic core consists of 2 alpha, 1 beta, 1 beta' and 1 omega subunit. When a sigma factor is associated with the core the holoenzyme is formed, which can initiate transcription. Mg(2+) serves as cofactor. Requires Zn(2+) as cofactor.

It catalyses the reaction RNA(n) + a ribonucleoside 5'-triphosphate = RNA(n+1) + diphosphate. DNA-dependent RNA polymerase catalyzes the transcription of DNA into RNA using the four ribonucleoside triphosphates as substrates. This is DNA-directed RNA polymerase subunit beta' from Phocaeicola vulgatus (strain ATCC 8482 / DSM 1447 / JCM 5826 / CCUG 4940 / NBRC 14291 / NCTC 11154) (Bacteroides vulgatus).